The sequence spans 94 residues: Protein RESPONSE TO LOW SULFUR 1 (94 aa).

Residues 8-35 (VTVAAEEMDELRRRNIELSREVAEMKTE) adopt a coiled-coil conformation.

The sequence is that of Protein RESPONSE TO LOW SULFUR 1 from Arabidopsis thaliana (Mouse-ear cress).